Reading from the N-terminus, the 392-residue chain is Succinyl-diaminopimelate desuccinylase (392 aa).

Histidine 76 provides a ligand contact to Zn(2+). Aspartate 78 is a catalytic residue. Aspartate 107 serves as a coordination point for Zn(2+). Glutamate 143 functions as the Proton acceptor in the catalytic mechanism. Glutamate 144, glutamate 172, and histidine 357 together coordinate Zn(2+).

The protein belongs to the peptidase M20A family. DapE subfamily. Homodimer. Zn(2+) is required as a cofactor. Co(2+) serves as cofactor.

The enzyme catalyses N-succinyl-(2S,6S)-2,6-diaminopimelate + H2O = (2S,6S)-2,6-diaminopimelate + succinate. The protein operates within amino-acid biosynthesis; L-lysine biosynthesis via DAP pathway; LL-2,6-diaminopimelate from (S)-tetrahydrodipicolinate (succinylase route): step 3/3. In terms of biological role, catalyzes the hydrolysis of N-succinyl-L,L-diaminopimelic acid (SDAP), forming succinate and LL-2,6-diaminopimelate (DAP), an intermediate involved in the bacterial biosynthesis of lysine and meso-diaminopimelic acid, an essential component of bacterial cell walls. The sequence is that of Succinyl-diaminopimelate desuccinylase from Helicobacter hepaticus (strain ATCC 51449 / 3B1).